A 274-amino-acid polypeptide reads, in one-letter code: Large ribosomal subunit protein uL2 (274 aa).

Disordered stretches follow at residues 28–54 and 221–274; these read KPFAPLLEKNSKTGGRNNNGRITTRHI and RGTA…RSKK. Residues 39–49 show a composition bias toward polar residues; it reads KTGGRNNNGRI.

It belongs to the universal ribosomal protein uL2 family. In terms of assembly, part of the 50S ribosomal subunit. Forms a bridge to the 30S subunit in the 70S ribosome.

Functionally, one of the primary rRNA binding proteins. Required for association of the 30S and 50S subunits to form the 70S ribosome, for tRNA binding and peptide bond formation. It has been suggested to have peptidyltransferase activity; this is somewhat controversial. Makes several contacts with the 16S rRNA in the 70S ribosome. This Edwardsiella ictaluri (strain 93-146) protein is Large ribosomal subunit protein uL2.